Here is a 443-residue protein sequence, read N- to C-terminus: Glutamyl-tRNA reductase (443 aa).

Substrate contacts are provided by residues 49-52 (TCNR), Ser109, 114-116 (ETQ), and Gln120. The active-site Nucleophile is Cys50. 189–194 (GAGKMG) serves as a coordination point for NADP(+).

The protein belongs to the glutamyl-tRNA reductase family. In terms of assembly, homodimer.

The catalysed reaction is (S)-4-amino-5-oxopentanoate + tRNA(Glu) + NADP(+) = L-glutamyl-tRNA(Glu) + NADPH + H(+). It participates in porphyrin-containing compound metabolism; protoporphyrin-IX biosynthesis; 5-aminolevulinate from L-glutamyl-tRNA(Glu): step 1/2. In terms of biological role, catalyzes the NADPH-dependent reduction of glutamyl-tRNA(Glu) to glutamate 1-semialdehyde (GSA). The sequence is that of Glutamyl-tRNA reductase from Bacillus mycoides (strain KBAB4) (Bacillus weihenstephanensis).